An 82-amino-acid polypeptide reads, in one-letter code: Probable 26S proteasome complex subunit dss-1 (82 aa).

The interval 56 to 82 (NWDDETHESEFSKQLKEELRKSGHQVA) is disordered. A compositionally biased stretch (basic and acidic residues) spans 63–76 (ESEFSKQLKEELRK).

It belongs to the DSS1/SEM1 family. As to quaternary structure, part of the 26S proteasome. In terms of tissue distribution, expressed in intestinal epithelium and head neurons.

The protein resides in the nucleus. It localises to the cytoplasm. Functionally, subunit of the 26S proteasome which plays a role in ubiquitin-dependent proteolysis. Has an essential role in oogenesis and larval growth. Required for intestinal function and default lifespan. This Caenorhabditis elegans protein is Probable 26S proteasome complex subunit dss-1 (dss-1).